The sequence spans 241 residues: ATP synthase subunit a (241 aa).

The next 8 membrane-spanning stretches (helical) occupy residues 29-49 (NSSFFTMISVILMILFLLFGI), 54-74 (VIPGYLQAAVEYVYDFVISII), 86-106 (IPLIFTVFIFILSCNLVGVLP), 114-134 (HVIVTFALSMVVFIYITIVGF), 153-173 (WLAPIIIIIKLFAYLVRPVSL), 177-197 (LAANMIAGHTIIKVIAGFIVN), 200-220 (IFFTPAPFLFIIALIGFEVFV), and 221-241 (AILQAYIFTILTCVYLSDAVK).

It belongs to the ATPase A chain family. In terms of assembly, F-type ATPases have 2 components, CF(1) - the catalytic core - and CF(0) - the membrane proton channel. CF(1) has five subunits: alpha(3), beta(3), gamma(1), delta(1), epsilon(1). CF(0) has three main subunits: a(1), b(2) and c(9-12). The alpha and beta chains form an alternating ring which encloses part of the gamma chain. CF(1) is attached to CF(0) by a central stalk formed by the gamma and epsilon chains, while a peripheral stalk is formed by the delta and b chains.

The protein resides in the cell membrane. Its function is as follows. Key component of the proton channel; it plays a direct role in the translocation of protons across the membrane. The protein is ATP synthase subunit a of Wolbachia pipientis wMel.